The primary structure comprises 600 residues: MMRAMWEALAALAAVSCLVGAVRGGPGLSMFAGQAAQPDPCSDENGHPRRCIPDFVNAAFGKDVRVSSTCGRPPARYCVVSERGEERLRSCHLCNASDPKKAHPPAFLTDLNNPHNLTCWQSENYLQFPHNVTLTLSLGKKFEVTYVSLQFCSPRPESMAIYKSMDYGRTWVPFQFYSTQCRKMYNRPHRAPITKQNEQEAVCTDSHTDMRPLSGGLIAFSTLDGRPSAHDFDNSPVLQDWVTATDIRVAFSRLHTFGDENEDDSELARDSYFYAVSDLQVGGRCKCNGHAARCVRDRDDSLVCDCRHNTAGPECDRCKPFHYDRPWQRATAREANECVACNCNLHARRCRFNMELYKLSGRKSGGVCLNCRHNTAGRHCHYCKEGYFRDLGKPITHRKACKACDCHPVGAAGKTCNQTTGQCPCKDGVTGVTCNRCAKGYQQSRSPIAPCIKIPVAPPTTAASSVEEPEDCDSYCKASKGKLKINMKKYCKKDYAVQIHILKADKAGDWWKFTVNIISVYKQGASRIRRGDQNLWIRSRDIACKCPKIKPLKKYLLLGNAEDSPDQSGIVADKSSLVIQWRDTWARRLRKFQQREKKEL.

The N-terminal stretch at 1 to 24 (MMRAMWEALAALAAVSCLVGAVRG) is a signal peptide. The Laminin N-terminal domain maps to 47 to 284 (HPRRCIPDFV…AVSDLQVGGR (238 aa)). Residues N95, N116, and N131 are each glycosylated (N-linked (GlcNAc...) asparagine). Disulfide bonds link C119/C152, C285/C294, C287/C304, C306/C315, C318/C338, C341/C350, C343/C368, C371/C380, C383/C401, C404/C416, C406/C423, C425/C434, C437/C451, and C472/C544. Laminin EGF-like domains follow at residues 285-340 (CKCN…ECVA), 341-403 (CNCN…ACKA), and 404-453 (CDCH…PCIK). N-linked (GlcNAc...) asparagine glycosylation is present at N417. Residues 472-600 (CDSYCKASKG…KFQQREKKEL (129 aa)) form the NTR domain. Positions 530 to 532 (RGD) match the Cell attachment site motif.

In terms of assembly, binds to its receptors; DCC, UNC5A, UNC5B, UNC5C and probably UNC5D. Binds to its receptor; DSCAM. Interacts with APP.

The protein resides in the secreted. It is found in the cytoplasm. Its function is as follows. Netrins control guidance of CNS commissural axons and peripheral motor axons. Its association with either DCC or some UNC5 receptors will lead to axon attraction or repulsion, respectively. Binding to UNC5C might cause dissociation of UNC5C from polymerized TUBB3 in microtubules and thereby lead to increased microtubule dynamics and axon repulsion. Involved in dorsal root ganglion axon projection towards the spinal cord. It also serves as a survival factor via its association with its receptors which prevent the initiation of apoptosis. Involved in colorectal tumorigenesis by regulating apoptosis. This is Netrin-1 (NTN1) from Sus scrofa (Pig).